Reading from the N-terminus, the 57-residue chain is UPF0391 membrane protein Atu4467 (57 aa).

2 helical membrane-spanning segments follow: residues 4 to 24 and 33 to 53; these read WALI…TGIS and ILFF…LMAG.

This sequence belongs to the UPF0391 family.

The protein localises to the cell membrane. The sequence is that of UPF0391 membrane protein Atu4467 from Agrobacterium fabrum (strain C58 / ATCC 33970) (Agrobacterium tumefaciens (strain C58)).